The following is a 229-amino-acid chain: MAGKKYREAATKIERFRDYELAEAIEKVKEVTTTKFDATVDVAVKLGVDPRHADQVVRGTVMLPHGTGKTVSVLVICKETKAEEAKEAGADFVGFEEYITKIQEGWTGVDVIIATPDVMGQLGKVAKILGPRGLMPNPKSGTVTMDVAKAVKEVKAGKIEFRVDKAGNIHAPVGKVSFDSEHLNTNIVAFLKEVVRLKPSAAKGQYVQGIALSSTMSPSVKVKMDKFIS.

This sequence belongs to the universal ribosomal protein uL1 family. Part of the 50S ribosomal subunit.

In terms of biological role, binds directly to 23S rRNA. The L1 stalk is quite mobile in the ribosome, and is involved in E site tRNA release. Protein L1 is also a translational repressor protein, it controls the translation of the L11 operon by binding to its mRNA. The polypeptide is Large ribosomal subunit protein uL1 (Chlorobium chlorochromatii (strain CaD3)).